A 436-amino-acid polypeptide reads, in one-letter code: ATP-dependent protease ATPase subunit HslU (436 aa).

ATP-binding positions include Ile19, 61–65 (GVGKT), Asp249, Glu314, and Arg386.

The protein belongs to the ClpX chaperone family. HslU subfamily. As to quaternary structure, a double ring-shaped homohexamer of HslV is capped on each side by a ring-shaped HslU homohexamer. The assembly of the HslU/HslV complex is dependent on binding of ATP.

It is found in the cytoplasm. ATPase subunit of a proteasome-like degradation complex; this subunit has chaperone activity. The binding of ATP and its subsequent hydrolysis by HslU are essential for unfolding of protein substrates subsequently hydrolyzed by HslV. HslU recognizes the N-terminal part of its protein substrates and unfolds these before they are guided to HslV for hydrolysis. This chain is ATP-dependent protease ATPase subunit HslU, found in Bartonella henselae (strain ATCC 49882 / DSM 28221 / CCUG 30454 / Houston 1) (Rochalimaea henselae).